We begin with the raw amino-acid sequence, 139 residues long: MVHNDLDFIFYNNLKHSSGAIEHLGDNLTGDGDXDDEEIIIDLSLIPQNISRINFTVTIHEAGERSQNFGQVSNAYVRVVNSDNSQELLKYDLGEDFSIETAIVVAEIYRHNGEWKFNAIGSGFQGGLAALCRNFGLNV.

This sequence belongs to the CAPAB/TerDEXZ family.

Not known; could confer methyl methane sulfonate (MMS), mitomycin C (MC), and UV resistance. This chain is Chemical-damaging agent resistance protein B, found in Clostridium acetobutylicum.